The chain runs to 139 residues: ATP synthase epsilon chain, chloroplastic (139 aa).

This sequence belongs to the ATPase epsilon chain family. As to quaternary structure, F-type ATPases have 2 components, CF(1) - the catalytic core - and CF(0) - the membrane proton channel. CF(1) has five subunits: alpha(3), beta(3), gamma(1), delta(1), epsilon(1). CF(0) has three main subunits: a, b and c.

The protein localises to the plastid. It is found in the chloroplast thylakoid membrane. Functionally, produces ATP from ADP in the presence of a proton gradient across the membrane. The polypeptide is ATP synthase epsilon chain, chloroplastic (Dictyota dichotoma).